Reading from the N-terminus, the 453-residue chain is Bifunctional protein GlmU (453 aa).

Residues 1–225 (MNIVILAAGT…GWETLGVNSK (225 aa)) form a pyrophosphorylase region. UDP-N-acetyl-alpha-D-glucosamine contacts are provided by residues 6–9 (LAAG), Lys20, Gln71, 76–77 (GT), 98–100 (YGD), Gly135, Glu150, Asn165, and Asn223. Asp100 contributes to the Mg(2+) binding site. Mg(2+) is bound at residue Asn223. Residues 226-246 (AQLAELERIHQRNLADALLAA) form a linker region. An N-acetyltransferase region spans residues 247 to 453 (GVTLADPARI…GYVRPVKKKS (207 aa)). UDP-N-acetyl-alpha-D-glucosamine-binding residues include Arg329 and Lys347. His359 functions as the Proton acceptor in the catalytic mechanism. Residues Tyr362 and Asn373 each contribute to the UDP-N-acetyl-alpha-D-glucosamine site. Residues Ala376, 382 to 383 (NY), Ser401, and Ala419 each bind acetyl-CoA.

In the N-terminal section; belongs to the N-acetylglucosamine-1-phosphate uridyltransferase family. It in the C-terminal section; belongs to the transferase hexapeptide repeat family. Homotrimer. Mg(2+) is required as a cofactor.

The protein localises to the cytoplasm. It carries out the reaction alpha-D-glucosamine 1-phosphate + acetyl-CoA = N-acetyl-alpha-D-glucosamine 1-phosphate + CoA + H(+). The catalysed reaction is N-acetyl-alpha-D-glucosamine 1-phosphate + UTP + H(+) = UDP-N-acetyl-alpha-D-glucosamine + diphosphate. The protein operates within nucleotide-sugar biosynthesis; UDP-N-acetyl-alpha-D-glucosamine biosynthesis; N-acetyl-alpha-D-glucosamine 1-phosphate from alpha-D-glucosamine 6-phosphate (route II): step 2/2. It participates in nucleotide-sugar biosynthesis; UDP-N-acetyl-alpha-D-glucosamine biosynthesis; UDP-N-acetyl-alpha-D-glucosamine from N-acetyl-alpha-D-glucosamine 1-phosphate: step 1/1. Its pathway is bacterial outer membrane biogenesis; LPS lipid A biosynthesis. Catalyzes the last two sequential reactions in the de novo biosynthetic pathway for UDP-N-acetylglucosamine (UDP-GlcNAc). The C-terminal domain catalyzes the transfer of acetyl group from acetyl coenzyme A to glucosamine-1-phosphate (GlcN-1-P) to produce N-acetylglucosamine-1-phosphate (GlcNAc-1-P), which is converted into UDP-GlcNAc by the transfer of uridine 5-monophosphate (from uridine 5-triphosphate), a reaction catalyzed by the N-terminal domain. This is Bifunctional protein GlmU from Burkholderia pseudomallei (strain K96243).